A 417-amino-acid polypeptide reads, in one-letter code: Tyrosine aminotransferase (417 aa).

N6-(pyridoxal phosphate)lysine is present on Lys249.

This sequence belongs to the class-I pyridoxal-phosphate-dependent aminotransferase family. Homodimer. Pyridoxal 5'-phosphate is required as a cofactor.

It carries out the reaction L-tyrosine + 2-oxoglutarate = 3-(4-hydroxyphenyl)pyruvate + L-glutamate. It participates in amino-acid degradation; L-phenylalanine degradation; acetoacetate and fumarate from L-phenylalanine: step 2/6. Its function is as follows. Transaminase involved in tyrosine breakdown. Converts tyrosine to p-hydroxyphenylpyruvate. Has much lower affinity and transaminase activity towards phenylalanine. The sequence is that of Tyrosine aminotransferase (tat) from Dictyostelium discoideum (Social amoeba).